Reading from the N-terminus, the 146-residue chain is D-aminoacyl-tRNA deacylase (146 aa).

The Gly-cisPro motif, important for rejection of L-amino acids signature appears at 137 to 138 (GP).

Belongs to the DTD family. In terms of assembly, homodimer.

Its subcellular location is the cytoplasm. The enzyme catalyses glycyl-tRNA(Ala) + H2O = tRNA(Ala) + glycine + H(+). It carries out the reaction a D-aminoacyl-tRNA + H2O = a tRNA + a D-alpha-amino acid + H(+). In terms of biological role, an aminoacyl-tRNA editing enzyme that deacylates mischarged D-aminoacyl-tRNAs. Also deacylates mischarged glycyl-tRNA(Ala), protecting cells against glycine mischarging by AlaRS. Acts via tRNA-based rather than protein-based catalysis; rejects L-amino acids rather than detecting D-amino acids in the active site. By recycling D-aminoacyl-tRNA to D-amino acids and free tRNA molecules, this enzyme counteracts the toxicity associated with the formation of D-aminoacyl-tRNA entities in vivo and helps enforce protein L-homochirality. The chain is D-aminoacyl-tRNA deacylase from Bacillus thuringiensis subsp. konkukian (strain 97-27).